The sequence spans 154 residues: Myoglobin (154 aa).

One can recognise a Globin domain in the interval glycine 2–lysine 148. Serine 4 carries the phosphoserine modification. Residue histidine 65 participates in nitrite binding. O2 is bound at residue histidine 65. Residue threonine 68 is modified to Phosphothreonine. Histidine 94 contributes to the heme b binding site.

This sequence belongs to the globin family. As to quaternary structure, monomeric.

Its subcellular location is the cytoplasm. The protein resides in the sarcoplasm. It carries out the reaction Fe(III)-heme b-[protein] + nitric oxide + H2O = Fe(II)-heme b-[protein] + nitrite + 2 H(+). The catalysed reaction is H2O2 + AH2 = A + 2 H2O. Its function is as follows. Monomeric heme protein which primary function is to store oxygen and facilitate its diffusion within muscle tissues. Reversibly binds oxygen through a pentacoordinated heme iron and enables its timely and efficient release as needed during periods of heightened demand. Depending on the oxidative conditions of tissues and cells, and in addition to its ability to bind oxygen, it also has a nitrite reductase activity whereby it regulates the production of bioactive nitric oxide. Under stress conditions, like hypoxia and anoxia, it also protects cells against reactive oxygen species thanks to its pseudoperoxidase activity. This Orycteropus afer (Aardvark) protein is Myoglobin (MB).